Here is a 126-residue protein sequence, read N- to C-terminus: Small ribosomal subunit protein uS12 (126 aa).

The interval 1 to 28 is disordered; the sequence is MPTINQLVRKGRQSETTKSKSPALQDCP. Position 89 is a 3-methylthioaspartic acid (aspartate 89). The interval 103–126 is disordered; the sequence is DTQGVKDRKQARSKYGAKRAKAAK. Residues 113–126 show a composition bias toward basic residues; that stretch reads ARSKYGAKRAKAAK.

This sequence belongs to the universal ribosomal protein uS12 family. Part of the 30S ribosomal subunit. Contacts proteins S8 and S17. May interact with IF1 in the 30S initiation complex.

In terms of biological role, with S4 and S5 plays an important role in translational accuracy. Its function is as follows. Interacts with and stabilizes bases of the 16S rRNA that are involved in tRNA selection in the A site and with the mRNA backbone. Located at the interface of the 30S and 50S subunits, it traverses the body of the 30S subunit contacting proteins on the other side and probably holding the rRNA structure together. The combined cluster of proteins S8, S12 and S17 appears to hold together the shoulder and platform of the 30S subunit. The sequence is that of Small ribosomal subunit protein uS12 from Burkholderia orbicola (strain MC0-3).